The following is a 1006-amino-acid chain: Pentatricopeptide repeat-containing protein At1g30610, chloroplastic (1006 aa).

Residues 1-40 (MAVTISTNAFVNASLLDESRNSFWRPLFHQPYYNCRRVVR) constitute a chloroplast transit peptide. 2 disordered regions span residues 180–219 (LSKSGESSVTVPEDESFRKRYSKQEYHRSSDTSRGIERGS) and 248–292 (SSVA…IARG). Residues 194–219 (ESFRKRYSKQEYHRSSDTSRGIERGS) show a composition bias toward basic and acidic residues. Over residues 254 to 263 (WSNSGESSVT) the composition is skewed to polar residues. Residues 265 to 284 (PKDESFRRRYSKQEHHRSSD) are compositionally biased toward basic and acidic residues. 10 PPR repeats span residues 468–502 (TDYTVMRLIHFLGKLGNWRRVLQVIEWLQRQDRYK), 506–536 (IRIIYTTALNVLGKSRRPVEALNVFHAMLLQ), 542–572 (DMVAYRSIAVTLGQAGHIKELFYVIDTMRSP), 592–626 (DVVVYNAVLNACVQRKQWEGAFWVLQQLKQRGQKP), 627–657 (SPVTYGLIMEVMLACEKYNLVHEFFRKMQKS), 661–695 (NALAYRVLVNTLWKEGKSDEAVHTVEDMESRGIVG), 759–789 (LVVTYTGLIQACVDSGNIKNAAYIFDQMKKV), 793–827 (NLVTCNIMLKAYLQGGLFEEARELFQKMSEDGNHI), 840–874 (DTYTFNTMLDTCAEQEKWDDFGYAYREMLRHGYHF), and 875–909 (NAKRHLRMVLEASRAGKEEVMEATWEHMRRSNRIP).

The protein belongs to the PPR family. P subfamily.

The protein localises to the plastid. It localises to the chloroplast. In terms of biological role, may play a role in embryogenesis. This chain is Pentatricopeptide repeat-containing protein At1g30610, chloroplastic (EMB2279), found in Arabidopsis thaliana (Mouse-ear cress).